We begin with the raw amino-acid sequence, 484 residues long: MGQLVSFFQEIPNIIQEAINIALIAVSLIAILKGLVNLWKSGLFQLLVFLILAGRSCSFKIGRSTELQNITINMLKVFEDHPISCTVNKTLYYIRESENATWCVEIAALDMSVLLSPHDPRVMGNLSNCVHPDIKHRSELLGLLEWILRALKYDFLNYPPLLCEKVTSSVNETRIQINVSDSAGSHDFKETMLQRLAILFGTKLMFDKTPKQFIVIRNQTWVNQCKSNHVNTLHLMMANAGHAVKLRRLQGVFTWTITDAAGNDMPGGYCLERWMLVTSDLKCFGNTALAKCNLNHDSEFCDMLKLFEFNKKAIESLNDNTKNKVNLLTHSINALISDNLLMKNRLKELLDTPYCNYTKFWYVNHTITGEHSLPRCWMVKNNSYLNESEFRNDWILESDHLLSEMLNKEYFDRQGKTPITLVDICFWSTLFFTTTLFLHLVGFPTHRHIQGEPCPLPHKLNSNGGCRCGRYPELKKPTTWHRKH.

The N-myristoyl glycine; by host moiety is linked to residue glycine 2. At 2 to 17 (GQLVSFFQEIPNIIQE) the chain is on the extracellular side. A helical transmembrane segment spans residues 18 to 33 (AINIALIAVSLIAILK). Residues 34–58 (GLVNLWKSGLFQLLVFLILAGRSCS) are Cytoplasmic-facing. Cysteine 57 serves as a coordination point for Zn(2+). The Extracellular portion of the chain corresponds to 59–423 (FKIGRSTELQ…QGKTPITLVD (365 aa)). 4 disulfide bridges follow: cysteine 85–cysteine 225, cysteine 270–cysteine 283, cysteine 292–cysteine 301, and cysteine 355–cysteine 376. Asparagine 88, asparagine 125, asparagine 178, and asparagine 218 each carry an N-linked (GlcNAc...) asparagine; by host glycan. Residues asparagine 356, asparagine 364, asparagine 381, and asparagine 386 are each glycosylated (N-linked (GlcNAc...) asparagine; by host). Residues 424–444 (ICFWSTLFFTTTLFLHLVGFP) traverse the membrane as a helical segment. The Cytoplasmic portion of the chain corresponds to 445–484 (THRHIQGEPCPLPHKLNSNGGCRCGRYPELKKPTTWHRKH). 7 residues coordinate Zn(2+): histidine 446, histidine 448, cysteine 454, histidine 458, cysteine 466, cysteine 468, and histidine 484.

It belongs to the arenaviridae GPC protein family. As to quaternary structure, interacts with glycoprotein G2. Part of the GP complex (GP-C) together with glycoprotein G1 and glycoprotein G2. The GP-complex interacts with protein Z, which interacts with ribonucleocapsid; these interactions may induce virion budding. In terms of assembly, homotrimer; disulfide-linked. In pre-fusion state, G1 homotrimers bind G2 homotrimers via ionic interactions. Part of the GP complex (GP-C) together with glycoprotein G2 and the stable signal peptide. The GP-complex interacts with protein Z, which interacts with ribonucleocapsid; these interactions may induce virion budding. Homotrimer. Interacts with the stable signal peptide. In pre-fusion state, G2 homotrimers bind G1 homotrimers via ionic interactions. Part of the GP complex (GP-C) together with glycoprotein G1 and the stable signal peptide. Acidification in the endosome triggers rearrangements, which ultimately leads to a 6 helix bundle formed by the two heptad repeat domains (HR1 and HR2) in post-fusion state. The GP-complex interacts with protein Z, which interacts with ribonucleocapsid; these interactions may induce virion budding. In terms of processing, specific enzymatic cleavages in vivo yield mature proteins. GP-C polyprotein is cleaved in the endoplasmic reticulum by the host protease MBTPS1. Only cleaved glycoprotein is incorporated into virions. The SSP remains stably associated with the GP complex following cleavage by signal peptidase and plays crucial roles in the trafficking of GP through the secretory pathway. Post-translationally, myristoylation is necessary for GP2-mediated fusion activity.

The protein resides in the virion membrane. It localises to the host endoplasmic reticulum membrane. Its subcellular location is the host Golgi apparatus membrane. It is found in the host cell membrane. Its function is as follows. Functions as a cleaved signal peptide that is retained as the third component of the GP complex (GP-C). Helps to stabilize the spike complex in its native conformation. The SSP is required for efficient glycoprotein expression, post-translational maturation cleavage of G1 and G2, glycoprotein transport to the cell surface plasma membrane, formation of infectious virus particles, and acid pH-dependent glycoprotein-mediated cell fusion. Glycoprotein G1: Forms the virion spikes together with glycoprotein G2. The glycoprotein spike trimers are connected to the underlying matrix. Interacts with the host receptor leading to virus endocytosis. Functionally, forms the virion spikes together with glycoprotein G1. The glycoprotein spike trimers are connected to the underlying matrix. Class I viral fusion protein that directs fusion of viral and host endosomal membranes, leading to delivery of the nucleocapsid into the cytoplasm. Membrane fusion is mediated by irreversible conformational changes induced by acidification. In Chapare mammarenavirus (isolate Human/Bolivia/810419/2003), this protein is Pre-glycoprotein polyprotein GP complex.